The primary structure comprises 392 residues: MASVEEIRNAQRAKGPATVLAIGTATPDNCLYQSDFADYYFRVTKSEHMTELKKKFNRICDKSMIKKRYIHLTEEMLEEHPNIGAYMAPSLNIRQEIITAEVPKLGKEAALKALKEWGQPKSKITHLVFCTTSGVEMPGADYKLANLLGLEPSVRRVMLYHQGCYAGGTVLRTAKDLAENNAGARVLVVCSEITVVTFRGPSEDALDSLVGQALFGDGSAAVIVGSDPDISIERPLFQLVSAAQTFIPNSAGAIAGNLREVGLTFHLWPNVPTLISENIENCLTKAFDPIGISDWNSLFWIAHPGGPAILDAVEAKVGLDKQKLKATRHILSEYGNMSSACVLFILDEMRKKSLKEGKTTTGEGLDWGVLFGFGPGLTIETVVLHSVGTDSN.

Residue 55 to 58 (KFNR) participates in substrate binding. Residue Cys-164 is part of the active site. Substrate is bound by residues Leu-267 and 305–307 (GGP).

Belongs to the thiolase-like superfamily. Chalcone/stilbene synthases family. Homodimer.

The protein resides in the cytoplasm. It catalyses the reaction 4-coumaroyl-CoA + 3 malonyl-CoA + 3 H(+) = trans-resveratrol + 4 CO2 + 4 CoA. It participates in phytoalexin biosynthesis; 3,4',5-trihydroxystilbene biosynthesis; 3,4',5-trihydroxystilbene from trans-4-coumarate: step 2/2. Its function is as follows. Mediates resistance to pathogens which are sensitive to stilbenes. This Vitis vinifera (Grape) protein is Stilbene synthase 4.